We begin with the raw amino-acid sequence, 812 residues long: Probable phosphoketolase (812 aa).

It belongs to the XFP family. The cofactor is thiamine diphosphate.

In Thermosynechococcus vestitus (strain NIES-2133 / IAM M-273 / BP-1), this protein is Probable phosphoketolase.